Consider the following 190-residue polypeptide: Dynein axonemal light chain 1 (190 aa).

Residue A2 is modified to N-acetylalanine. LRR repeat units follow at residues 49-70 (NCEK…NGLK), 71-92 (NLRI…EAVG), 94-115 (TLEE…HIMK), and 116-137 (KLKI…VKLA). At S56 the chain carries Phosphoserine. An LRRCT domain is found at 150 to 190 (NPLEEKHSAENNWIEEATKRVPKLKKLDGTPVIKGDEEEDN).

This sequence belongs to the dynein light chain LC1-type family. In terms of assembly, interacts with ZMYND10 (via C-terminus). Interacts with DNAH5, a outer arm dynein heavy chain. Interacts with tubulin located within the A-tubule of the outer doublets in a ATP-independent manner. In terms of tissue distribution, expressed in tissues carrying motile cilia such as respiratory epithelia, ependyma and testis.

It is found in the cytoplasm. It localises to the cytoskeleton. Its subcellular location is the cilium axoneme. Its function is as follows. Part of the multisubunit axonemal ATPase complexes that generate the force for cilia motility and govern beat frequency. Component of the outer arm dynein (ODA). May be involved in a mechanosensory feedback mechanism controlling ODA activity based on external conformational cues by tethering the outer arm dynein heavy chain (DNAH5) to the microtubule within the axoneme. Important for ciliary function in the airways and for the function of the cilia that produce the nodal flow essential for the determination of the left-right asymmetry. This Homo sapiens (Human) protein is Dynein axonemal light chain 1.